We begin with the raw amino-acid sequence, 233 residues long: TATA-box-binding protein 1 (233 aa).

2 tandem repeats follow at residues 58 to 134 (LQNI…ARIV) and 148 to 225 (IQNI…YPVL).

Belongs to the TBP family. In terms of assembly, belongs to the TFIID complex together with the TBP-associated factors (TAFs). Binds DNA as monomer.

It localises to the nucleus. Its function is as follows. General transcription factor that functions at the core of the DNA-binding multiprotein factor TFIID. Binding of TFIID to the TATA box is the initial transcriptional step of the pre-initiation complex (PIC), playing a role in the activation of eukaryotic genes transcribed by RNA polymerase II. The protein is TATA-box-binding protein 1 (TBP1) of Triticum aestivum (Wheat).